Reading from the N-terminus, the 568-residue chain is Sulfite reductase [NADPH] hemoprotein beta-component (568 aa).

Residues cysteine 425, cysteine 431, cysteine 470, and cysteine 474 each coordinate [4Fe-4S] cluster. Cysteine 474 serves as a coordination point for siroheme.

The protein belongs to the nitrite and sulfite reductase 4Fe-4S domain family. As to quaternary structure, alpha(8)-beta(8). The alpha component is a flavoprotein, the beta component is a hemoprotein. Siroheme serves as cofactor. Requires [4Fe-4S] cluster as cofactor.

It carries out the reaction hydrogen sulfide + 3 NADP(+) + 3 H2O = sulfite + 3 NADPH + 4 H(+). The protein operates within sulfur metabolism; hydrogen sulfide biosynthesis; hydrogen sulfide from sulfite (NADPH route): step 1/1. Functionally, component of the sulfite reductase complex that catalyzes the 6-electron reduction of sulfite to sulfide. This is one of several activities required for the biosynthesis of L-cysteine from sulfate. The chain is Sulfite reductase [NADPH] hemoprotein beta-component from Xanthomonas euvesicatoria pv. vesicatoria (strain 85-10) (Xanthomonas campestris pv. vesicatoria).